The primary structure comprises 347 residues: Dihydroorotase (347 aa).

2 residues coordinate Zn(2+): histidine 14 and histidine 16. Substrate is bound by residues histidine 16–arginine 18 and asparagine 42. The Zn(2+) site is built by lysine 100, histidine 137, and histidine 175. Lysine 100 is subject to N6-carboxylysine. Histidine 137 is a binding site for substrate. Position 220 (leucine 220) interacts with substrate. Position 248 (aspartate 248) interacts with Zn(2+). Aspartate 248 is a catalytic residue. Substrate is bound by residues histidine 252 and alanine 264.

It belongs to the metallo-dependent hydrolases superfamily. DHOase family. Class II DHOase subfamily. Homodimer. It depends on Zn(2+) as a cofactor.

The catalysed reaction is (S)-dihydroorotate + H2O = N-carbamoyl-L-aspartate + H(+). The protein operates within pyrimidine metabolism; UMP biosynthesis via de novo pathway; (S)-dihydroorotate from bicarbonate: step 3/3. Its function is as follows. Catalyzes the reversible cyclization of carbamoyl aspartate to dihydroorotate. This is Dihydroorotase from Pseudomonas syringae pv. syringae (strain B728a).